The primary structure comprises 227 residues: Cytochrome c oxidase subunit 2 (227 aa).

Over 1–14 (MAYPMQLGFQDATS) the chain is Mitochondrial intermembrane. A helical membrane pass occupies residues 15–45 (PIMEELLHFHDHTLMIVFLISSLVLYIISLM). The Mitochondrial matrix segment spans residues 46–59 (LTTKLTHTSTMDAQ). A helical membrane pass occupies residues 60–87 (EVETIWTILPAIILIMIALPSLRILYMM). Residues 88–227 (DEINNPSLTV…YFEKWSASML (140 aa)) lie on the Mitochondrial intermembrane side of the membrane. 5 residues coordinate Cu cation: Cys-196, Glu-198, Cys-200, His-204, and Met-207. Glu-198 contacts Mg(2+). Tyr-218 carries the post-translational modification Phosphotyrosine.

This sequence belongs to the cytochrome c oxidase subunit 2 family. In terms of assembly, component of the cytochrome c oxidase (complex IV, CIV), a multisubunit enzyme composed of 14 subunits. The complex is composed of a catalytic core of 3 subunits MT-CO1, MT-CO2 and MT-CO3, encoded in the mitochondrial DNA, and 11 supernumerary subunits COX4I, COX5A, COX5B, COX6A, COX6B, COX6C, COX7A, COX7B, COX7C, COX8 and NDUFA4, which are encoded in the nuclear genome. The complex exists as a monomer or a dimer and forms supercomplexes (SCs) in the inner mitochondrial membrane with NADH-ubiquinone oxidoreductase (complex I, CI) and ubiquinol-cytochrome c oxidoreductase (cytochrome b-c1 complex, complex III, CIII), resulting in different assemblies (supercomplex SCI(1)III(2)IV(1) and megacomplex MCI(2)III(2)IV(2)). Found in a complex with TMEM177, COA6, COX18, COX20, SCO1 and SCO2. Interacts with TMEM177 in a COX20-dependent manner. Interacts with COX20. Interacts with COX16. Cu cation serves as cofactor.

Its subcellular location is the mitochondrion inner membrane. The catalysed reaction is 4 Fe(II)-[cytochrome c] + O2 + 8 H(+)(in) = 4 Fe(III)-[cytochrome c] + 2 H2O + 4 H(+)(out). Component of the cytochrome c oxidase, the last enzyme in the mitochondrial electron transport chain which drives oxidative phosphorylation. The respiratory chain contains 3 multisubunit complexes succinate dehydrogenase (complex II, CII), ubiquinol-cytochrome c oxidoreductase (cytochrome b-c1 complex, complex III, CIII) and cytochrome c oxidase (complex IV, CIV), that cooperate to transfer electrons derived from NADH and succinate to molecular oxygen, creating an electrochemical gradient over the inner membrane that drives transmembrane transport and the ATP synthase. Cytochrome c oxidase is the component of the respiratory chain that catalyzes the reduction of oxygen to water. Electrons originating from reduced cytochrome c in the intermembrane space (IMS) are transferred via the dinuclear copper A center (CU(A)) of subunit 2 and heme A of subunit 1 to the active site in subunit 1, a binuclear center (BNC) formed by heme A3 and copper B (CU(B)). The BNC reduces molecular oxygen to 2 water molecules using 4 electrons from cytochrome c in the IMS and 4 protons from the mitochondrial matrix. The sequence is that of Cytochrome c oxidase subunit 2 (MT-CO2) from Ovis aries (Sheep).